The sequence spans 326 residues: Phospho-N-acetylmuramoyl-pentapeptide-transferase (326 aa).

A run of 9 helical transmembrane segments spans residues 3–23, 51–71, 79–99, 115–135, 138–158, 169–189, 195–215, 221–243, and 306–326; these read ISIS…PAFI, TMGG…FALF, VGMI…DDFL, LALQ…GGDI, VFGY…FWLV, GVDG…GVIA, MDIL…FIFN, VFMG…MALH, and FFFW…LYLM.

It belongs to the glycosyltransferase 4 family. MraY subfamily. Mg(2+) is required as a cofactor.

It is found in the cell membrane. The catalysed reaction is UDP-N-acetyl-alpha-D-muramoyl-L-alanyl-gamma-D-glutamyl-L-lysyl-D-alanyl-D-alanine + di-trans,octa-cis-undecaprenyl phosphate = Mur2Ac(oyl-L-Ala-gamma-D-Glu-L-Lys-D-Ala-D-Ala)-di-trans,octa-cis-undecaprenyl diphosphate + UMP. The protein operates within cell wall biogenesis; peptidoglycan biosynthesis. Functionally, catalyzes the initial step of the lipid cycle reactions in the biosynthesis of the cell wall peptidoglycan: transfers peptidoglycan precursor phospho-MurNAc-pentapeptide from UDP-MurNAc-pentapeptide onto the lipid carrier undecaprenyl phosphate, yielding undecaprenyl-pyrophosphoryl-MurNAc-pentapeptide, known as lipid I. The chain is Phospho-N-acetylmuramoyl-pentapeptide-transferase from Streptococcus pneumoniae serotype 2 (strain D39 / NCTC 7466).